Reading from the N-terminus, the 290-residue chain is Ribosome-inactivating protein bryodin I (290 aa).

The N-terminal stretch at 1–23 (MIKLLVLWLLILTIFLKSPTVEG) is a signal peptide. Residues glutamate 183 and glutamate 212 contribute to the active site. N-linked (GlcNAc...) asparagine glycosylation is found at asparagine 214 and asparagine 250. Residues 271–290 (AIGEDISMTLIGFEHGLYGI) constitute a propeptide, removed in mature form.

Belongs to the ribosome-inactivating protein family. Type 1 RIP subfamily. Post-translationally, appears to undergo proteolytic cleavage in the C-terminal to produce a shorter protein.

It catalyses the reaction Endohydrolysis of the N-glycosidic bond at one specific adenosine on the 28S rRNA.. In terms of biological role, ribosome-inactivating protein of type 1, inhibits protein synthesis in animal cells. The polypeptide is Ribosome-inactivating protein bryodin I (Bryonia dioica (Red bryony)).